A 123-amino-acid chain; its full sequence is Phospholipase A2 (123 aa).

7 cysteine pairs are disulfide-bonded: Cys11–Cys77, Cys27–Cys123, Cys29–Cys45, Cys44–Cys105, Cys51–Cys98, Cys61–Cys91, and Cys84–Cys96. Residues Tyr28, Gly30, and Gly32 each contribute to the Ca(2+) site. Residue His48 is part of the active site. Residue Asp49 participates in Ca(2+) binding. Residue Asp99 is part of the active site.

The protein belongs to the phospholipase A2 family. Monomer or homodimer. The cofactor is Ca(2+). Activated by trypsin cleavage in the duodenum. Can also be activated by thrombin or autocatalytically.

The protein resides in the secreted. It catalyses the reaction a 1,2-diacyl-sn-glycero-3-phosphocholine + H2O = a 1-acyl-sn-glycero-3-phosphocholine + a fatty acid + H(+). The enzyme catalyses 1,2-ditetradecanoyl-sn-glycero-3-phosphocholine + H2O = 1-tetradecanoyl-sn-glycero-3-phosphocholine + tetradecanoate + H(+). The catalysed reaction is 1,2-dihexadecanoyl-sn-glycero-3-phosphocholine + H2O = 1-hexadecanoyl-sn-glycero-3-phosphocholine + hexadecanoate + H(+). It carries out the reaction 1-hexadecanoyl-2-(9Z-octadecenoyl)-sn-glycero-3-phosphocholine + H2O = 1-hexadecanoyl-sn-glycero-3-phosphocholine + (9Z)-octadecenoate + H(+). It catalyses the reaction 1-hexadecanoyl-2-(5Z,8Z,11Z,14Z-eicosatetraenoyl)-sn-glycero-3-phosphocholine + H2O = 1-hexadecanoyl-sn-glycero-3-phosphocholine + (5Z,8Z,11Z,14Z)-eicosatetraenoate + H(+). The enzyme catalyses 1-hexadecanoyl-2-(9Z-octadecenoyl)-sn-glycero-3-phospho-(1'-sn-glycerol) + H2O = 1-hexadecanoyl-sn-glycero-3-phospho-(1'-sn-glycerol) + (9Z)-octadecenoate + H(+). The catalysed reaction is N-hexadecanoyl-1,2-di-(9Z-octadecenoyl)-sn-glycero-3-phosphoethanolamine + H2O = N-hexadecanoyl-1-(9Z-octadecenoyl)-sn-glycero-3-phosphoethanolamine + (9Z)-octadecenoate + H(+). It carries out the reaction 1-hexadecanoyl-2-(9Z,12Z-octadecadienoyl)-sn-glycero-3-phosphoethanolamine + H2O = 1-hexadecanoyl-sn-glycero-3-phosphoethanolamine + (9Z,12Z)-octadecadienoate + H(+). It catalyses the reaction N,1-dihexadecanoyl-2-(9Z,12Z-octadecadienoyl)-sn-glycero-3-phosphoethanolamine + H2O = N,1-dihexadecanoyl-sn-glycero-3-phosphoethanolamine + (9Z,12Z)-octadecadienoate + H(+). Secretory calcium-dependent phospholipase A2 that primarily targets dietary phospholipids in the intestinal tract. Hydrolyzes the ester bond of the fatty acyl group attached at sn-2 position of phospholipids (phospholipase A2 activity) with preference for phosphatidylethanolamines and phosphatidylglycerols over phosphatidylcholines. May play a role in the biosynthesis of N-acyl ethanolamines that regulate energy metabolism and inflammation in the intestinal tract. Hydrolyzes N-acyl phosphatidylethanolamines to N-acyl lysophosphatidylethanolamines, which are further cleaved by a lysophospholipase D to release N-acyl ethanolamines. May act in an autocrine and paracrine manner. Has anti-helminth activity in a process regulated by gut microbiota. Upon helminth infection of intestinal epithelia, directly affects phosphatidylethanolamine contents in the membrane of helminth larvae, likely controlling an array of phospholipid-mediated cellular processes such as membrane fusion and cell division while providing for better immune recognition, ultimately reducing larvae integrity and infectivity. This is Phospholipase A2 (PLA2G1B) from Ovis aries (Sheep).